The chain runs to 452 residues: Lipase member H (452 aa).

Positions 1-16 (MLRFYLFISLLCLVRS) are cleaved as a signal peptide. Asn50, Asn66, and Asn122 each carry an N-linked (GlcNAc...) asparagine glycan. Catalysis depends on Ser154, which acts as the Nucleophile. The active-site Charge relay system is Asp178. Cysteines 233 and 247 form a disulfide. His249 acts as the Charge relay system in catalysis. N-linked (GlcNAc...) asparagine glycosylation is present at Asn263. 3 disulfides stabilise this stretch: Cys271–Cys282, Cys285–Cys293, and Cys428–Cys447.

This sequence belongs to the AB hydrolase superfamily. Lipase family. As to quaternary structure, interacts with TTMP/C3orf52. In terms of tissue distribution, expressed in liver and lacrimal gland.

The protein resides in the secreted. Its subcellular location is the cell membrane. The enzyme catalyses 1-hexadecanoyl-2-(9Z-octadecenoyl)-sn-glycero-3-phosphate + H2O = 2-(9Z-octadecenoyl)-sn-glycero-3-phosphate + hexadecanoate + H(+). Functionally, hydrolyzes specifically phosphatidic acid (PA) to produce 2-acyl lysophosphatidic acid (LPA; a potent bioactive lipid mediator) and fatty acid. Does not hydrolyze other phospholipids, like phosphatidylserine (PS), phosphatidylcholine (PC) and phosphatidylethanolamine (PE) or triacylglycerol (TG). The protein is Lipase member H (LIPH) of Oryctolagus cuniculus (Rabbit).